We begin with the raw amino-acid sequence, 339 residues long: Anthranilate phosphoribosyltransferase (339 aa).

Residues G81, 84–85, T89, 91–94, 109–117, and S121 each bind 5-phospho-alpha-D-ribose 1-diphosphate; these read GD, NIST, and KHGNRSVSS. Position 81 (G81) interacts with anthranilate. Mg(2+) is bound at residue S93. N112 is a binding site for anthranilate. Position 165 (R165) interacts with anthranilate. Residues D224 and E225 each contribute to the Mg(2+) site.

Belongs to the anthranilate phosphoribosyltransferase family. Homodimer. Mg(2+) is required as a cofactor.

It catalyses the reaction N-(5-phospho-beta-D-ribosyl)anthranilate + diphosphate = 5-phospho-alpha-D-ribose 1-diphosphate + anthranilate. It participates in amino-acid biosynthesis; L-tryptophan biosynthesis; L-tryptophan from chorismate: step 2/5. In terms of biological role, catalyzes the transfer of the phosphoribosyl group of 5-phosphorylribose-1-pyrophosphate (PRPP) to anthranilate to yield N-(5'-phosphoribosyl)-anthranilate (PRA). The sequence is that of Anthranilate phosphoribosyltransferase from Thermosynechococcus vestitus (strain NIES-2133 / IAM M-273 / BP-1).